Consider the following 478-residue polypeptide: 3-isopropylmalate dehydratase large subunit (478 aa).

Cysteine 357, cysteine 418, and cysteine 421 together coordinate [4Fe-4S] cluster.

The protein belongs to the aconitase/IPM isomerase family. LeuC type 1 subfamily. Heterodimer of LeuC and LeuD. Requires [4Fe-4S] cluster as cofactor.

The enzyme catalyses (2R,3S)-3-isopropylmalate = (2S)-2-isopropylmalate. The protein operates within amino-acid biosynthesis; L-leucine biosynthesis; L-leucine from 3-methyl-2-oxobutanoate: step 2/4. Catalyzes the isomerization between 2-isopropylmalate and 3-isopropylmalate, via the formation of 2-isopropylmaleate. The polypeptide is 3-isopropylmalate dehydratase large subunit (Novosphingobium aromaticivorans (strain ATCC 700278 / DSM 12444 / CCUG 56034 / CIP 105152 / NBRC 16084 / F199)).